The primary structure comprises 577 residues: Sulfite reductase [NADPH] hemoprotein beta-component 2 (577 aa).

[4Fe-4S] cluster contacts are provided by cysteine 441, cysteine 447, cysteine 486, and cysteine 490. Cysteine 490 is a siroheme binding site.

This sequence belongs to the nitrite and sulfite reductase 4Fe-4S domain family. In terms of assembly, alpha(8)-beta(8). The alpha component is a flavoprotein, the beta component is a hemoprotein. Siroheme is required as a cofactor. Requires [4Fe-4S] cluster as cofactor.

The catalysed reaction is hydrogen sulfide + 3 NADP(+) + 3 H2O = sulfite + 3 NADPH + 4 H(+). Its pathway is sulfur metabolism; hydrogen sulfide biosynthesis; hydrogen sulfide from sulfite (NADPH route): step 1/1. Component of the sulfite reductase complex that catalyzes the 6-electron reduction of sulfite to sulfide. This is one of several activities required for the biosynthesis of L-cysteine from sulfate. The protein is Sulfite reductase [NADPH] hemoprotein beta-component 2 of Pectobacterium carotovorum subsp. carotovorum (strain PC1).